The primary structure comprises 570 residues: Double-stranded RNA-binding protein Staufen homolog 2 (570 aa).

Positions 8–75 constitute a DRBM 1 domain; it reads TAMCLVNELA…ANKALTESTL (68 aa). 2 disordered regions span residues 71-94 and 181-203; these read TEST…PGSI and NEPI…DDKD. The segment covering 83–94 has biased composition (polar residues); sequence PKSNVNNNPGSI. In terms of domain architecture, DRBM 2 spans 95 to 181; the sequence is TPTVELNGLA…AMKALQALQN (87 aa). Residue Ser-188 is modified to Phosphoserine. Over residues 194–203 the composition is skewed to basic and acidic residues; that stretch reads SGKDVDDDKD. 2 DRBM domains span residues 207–274 and 307–375; these read SEIS…ELKK and NPIS…QLGY. Short sequence motifs (nuclear localization signal) lie at residues 273 to 291 and 373 to 412; these read KKLP…FKKR and LGYK…PKGI. Positions 381–570 are required for dendritic transport; that stretch reads LQDQLEKTGE…QDCKKSNSAV (190 aa). The segment at 387–409 is disordered; that stretch reads KTGENKGWSGPKPGFPEPTNNTP. At Ser-395 the chain carries Phosphoserine. The residue at position 405 (Thr-405) is a Phosphothreonine. Ser-416, Ser-426, Ser-440, Ser-455, and Ser-492 each carry phosphoserine. The tract at residues 528–570 is disordered; that stretch reads DGAMNIEKGSLEKQAKHLREKADNNQAPPGSIAQDCKKSNSAV. Basic and acidic residues predominate over residues 536–550; sequence GSLEKQAKHLREKAD.

In terms of assembly, interacts with the exportin XPO5. This requires RNA and RAN bound to GTP. Interacts with microtubules. Isoform 2 and isoform 3 may also interact with ribosomes, and this association is independent of translation. Identified in a mRNP complex, at least composed of DHX9, DDX3X, ELAVL1, HNRNPU, IGF2BP1, ILF3, PABPC1, PCBP2, PTBP2, STAU1, STAU2, SYNCRIP and YBX1. Interacts with TRIM71 (via NHL repeats) in an RNA-dependent manner.

It localises to the cytoplasm. The protein resides in the nucleus. It is found in the nucleolus. The protein localises to the endoplasmic reticulum. RNA-binding protein required for the microtubule-dependent transport of neuronal RNA from the cell body to the dendrite. As protein synthesis occurs within the dendrite, the localization of specific mRNAs to dendrites may be a prerequisite for neurite outgrowth and plasticity at sites distant from the cell body. This Homo sapiens (Human) protein is Double-stranded RNA-binding protein Staufen homolog 2 (STAU2).